The following is a 1291-amino-acid chain: DNA-directed RNA polymerase subunit beta (1291 aa).

The protein belongs to the RNA polymerase beta chain family. As to quaternary structure, the RNAP catalytic core consists of 2 alpha, 1 beta, 1 beta' and 1 omega subunit. When a sigma factor is associated with the core the holoenzyme is formed, which can initiate transcription.

The enzyme catalyses RNA(n) + a ribonucleoside 5'-triphosphate = RNA(n+1) + diphosphate. In terms of biological role, DNA-dependent RNA polymerase catalyzes the transcription of DNA into RNA using the four ribonucleoside triphosphates as substrates. The sequence is that of DNA-directed RNA polymerase subunit beta from Mycoplasma mycoides subsp. mycoides SC (strain CCUG 32753 / NCTC 10114 / PG1).